A 781-amino-acid polypeptide reads, in one-letter code: Catalase-peroxidase (781 aa).

The N-terminal stretch at 1-20 (MLYIYYLFKSLFFHTLFVFS) is a signal peptide. Positions 125–272 (WHSAGTYRIG…LAAVQMGLIY (148 aa)) form a cross-link, tryptophyl-tyrosyl-methioninium (Trp-Tyr) (with M-298). Residue His-126 is the Proton acceptor of the active site. Residues 237–256 (VHHPDEHRGAKEKAAKNSDS) are disordered. The segment at residues 272-298 (YVNPEGPDGRPDPLASARDIRETFARM) is a cross-link (tryptophyl-tyrosyl-methioninium (Tyr-Met) (with W-125)). His-313 is a heme b binding site. The segment at 317–336 (KTHGAAPADNVGPEPEAGEL) is disordered.

This sequence belongs to the peroxidase family. Peroxidase/catalase subfamily. In terms of assembly, homodimer or homotetramer. It depends on heme b as a cofactor. Formation of the three residue Trp-Tyr-Met cross-link is important for the catalase, but not the peroxidase activity of the enzyme.

It carries out the reaction H2O2 + AH2 = A + 2 H2O. The enzyme catalyses 2 H2O2 = O2 + 2 H2O. Functionally, bifunctional enzyme with both catalase and broad-spectrum peroxidase activity. This Xylella fastidiosa (strain 9a5c) protein is Catalase-peroxidase.